A 282-amino-acid polypeptide reads, in one-letter code: tRNA N(3)-cytidine methyltransferase METTL6 (282 aa).

S-adenosyl-L-methionine-binding residues include tryptophan 45, tyrosine 49, glycine 87, aspartate 110, aspartate 136, leucine 137, and isoleucine 157.

Belongs to the methyltransferase superfamily. METL family. As to quaternary structure, monomer. Interacts with SARS1/SerRS; interaction is mediated via tRNA(Ser) and is required for N(3)-methylcytidine methylation.

Its subcellular location is the cytoplasm. The protein resides in the nucleus. It carries out the reaction cytidine(32) in tRNA(Ser) + S-adenosyl-L-methionine = N(3)-methylcytidine(32) in tRNA(Ser) + S-adenosyl-L-homocysteine + H(+). In terms of biological role, S-adenosyl-L-methionine-dependent methyltransferase that mediates N(3)-methylcytidine modification of residue 32 of the tRNA anticodon loop of tRNA(Ser), including tRNA(Ser)(UGA) and tRNA(Ser)(GCU). Interaction with SARS1/SerRS is required for N(3)-methylcytidine methylation. This Mus musculus (Mouse) protein is tRNA N(3)-cytidine methyltransferase METTL6.